Reading from the N-terminus, the 423-residue chain is COP9 signalosome complex subunit 3 (423 aa).

Residues Asn-197–Glu-365 enclose the PCI domain. Residues Gln-402–Ser-423 form a disordered region.

It belongs to the CSN3 family. As to quaternary structure, component of the CSN complex, probably composed of COPS1, COPS2, COPS3, COPS4, COPS5, COPS6, COPS7, COPS8 and COPS9.

Its subcellular location is the cytoplasm. It is found in the nucleus. Its function is as follows. Component of the COP9 signalosome complex (CSN), a complex involved in various cellular and developmental processes. The CSN complex is an essential regulator of the ubiquitin (Ubl) conjugation pathway by mediating the deneddylation of the cullin subunits of E3 ligase complexes, leading to modify the Ubl ligase activity. This is COP9 signalosome complex subunit 3 (COPS3) from Gallus gallus (Chicken).